A 334-amino-acid chain; its full sequence is NH(3)-dependent NAD(+) synthetase (334 aa).

Residue 47-54 (GLSGGIDS) participates in ATP binding. D53 serves as a coordination point for Mg(2+). R183 contacts deamido-NAD(+). T203 contributes to the ATP binding site. E208 contributes to the Mg(2+) binding site. Residues K216 and D223 each coordinate deamido-NAD(+). ATP is bound by residues K232 and T254.

Belongs to the NAD synthetase family. In terms of assembly, homodimer.

It catalyses the reaction deamido-NAD(+) + NH4(+) + ATP = AMP + diphosphate + NAD(+) + H(+). The protein operates within cofactor biosynthesis; NAD(+) biosynthesis; NAD(+) from deamido-NAD(+) (ammonia route): step 1/1. In terms of biological role, catalyzes the ATP-dependent amidation of deamido-NAD to form NAD. Uses ammonia as a nitrogen source. In Rhizobium meliloti (strain 1021) (Ensifer meliloti), this protein is NH(3)-dependent NAD(+) synthetase.